The sequence spans 179 residues: Small ribosomal subunit protein uS7 (179 aa).

It belongs to the universal ribosomal protein uS7 family. As to quaternary structure, part of the 30S ribosomal subunit. Contacts proteins S9 and S11. Cross-links to IF3 and the P and E site tRNAs.

Its function is as follows. One of the primary rRNA binding proteins, it binds directly to 16S rRNA where it nucleates assembly of the head domain of the 30S subunit. Is located at the subunit interface close to the decoding center, where it has been shown to contact mRNA. Has been shown to contact tRNA in both the P and E sites; it probably blocks exit of the E site tRNA. Protein S7 is also a translational repressor protein; it regulates the expression of the str operon members to different degrees by binding to its mRNA. The sequence is that of Small ribosomal subunit protein uS7 (rpsG) from Escherichia coli (strain K12).